Reading from the N-terminus, the 626-residue chain is 5'-AMP-activated protein kinase catalytic subunit alpha-2 (626 aa).

A compositionally biased stretch (basic and acidic residues) spans 1–24 (MFSHQDRDRDRKEDGGGDGTEMKS). The segment at 1–77 (MFSHQDRDRD…GETSTKQQQE (77 aa)) is disordered. The span at 38-49 (NLSRKLSAKSRK) shows a compositional bias: basic residues. Residues 58-77 (DNSSKMSSPGGETSTKQQQE) show a composition bias toward polar residues. Positions 87 to 339 (YILKETLGVG…IKDVIAHEWF (253 aa)) constitute a Protein kinase domain. ATP-binding positions include 93 to 101 (LGVGTFGKV) and Lys116. Asp210 (proton acceptor) is an active-site residue. Thr243 is subject to Phosphothreonine; by par-4. The interval 541–568 (SGSASASSSRHASMSMPQKPAGIRGTRT) is disordered. The segment covering 542–555 (GSASASSSRHASMS) has biased composition (low complexity).

This sequence belongs to the protein kinase superfamily. CAMK Ser/Thr protein kinase family. SNF1 subfamily. In terms of assembly, tetramer, composed of 2 regulatory (R) and 2 catalytic (C) subunits. In the presence of cAMP it dissociates into 2 active monomeric C subunits and an R dimer that binds four cAMP molecules. Phosphorylated on Thr-243 in response to oxidative stress and during dauer development. Phosphorylation at Thr-243 is increased in response to sodium azide or the AMP analog AICAR (5-amino-1-(5-phospho-beta-D-ribosyl)imidazole-4-carboxamide). As to expression, expressed in the pharynx, the ventral cord, neurons including the hermaphrodite-specific neuron, body wall muscles, the vulva, the excretory canal, and weakly in the intestine.

The catalysed reaction is L-seryl-[protein] + ATP = O-phospho-L-seryl-[protein] + ADP + H(+). The enzyme catalyses L-threonyl-[protein] + ATP = O-phospho-L-threonyl-[protein] + ADP + H(+). Its activity is regulated as follows. Activated by phosphorylation. Its function is as follows. Acts as a sensor that couples lifespan to information about energy levels and insulin-like signals. Role in motility and response to oxidative stress. Involved in the establishment of germline stem cell (GSC) quiescence during dauer development. Plays a role in axon regrowth after axotomy in PLM neurons. Plays a role in the maintenance of glycogen stores which are necessary for resistance to hyperosmotic stress. Plays a role in the regulation of flp-7 secretion from ASI neurons. Keeps the CREB-regulated transcription coactivator 1 homolog crtc-1 inactive which in turn inhibits flp-7 secretion. Following serotonin signaling, derepresses crtc-1 which stimulates flp-7 secretion and subsequent body fat loss. The polypeptide is 5'-AMP-activated protein kinase catalytic subunit alpha-2 (Caenorhabditis elegans).